Here is a 1226-residue protein sequence, read N- to C-terminus: Methionine synthase (1226 aa).

The Hcy-binding domain maps to 6–326 (RAQIEAQLKQ…EHIRHMAMAV (321 aa)). Zn(2+) is bound by residues Cys248, Cys311, and Cys312. The 262-residue stretch at 357 to 618 (FVNVGERTNV…VPEKLREAVE (262 aa)) folds into the Pterin-binding domain. The B12-binding N-terminal domain occupies 651-745 (SALEWRTWSV…FINASKQAGS (95 aa)). Residues Glu695, 757–761 (GDVHD), His760, Ser805, Thr809, and Ala861 contribute to the methylcob(III)alamin site. Residues 747 to 882 (NGKILLATVK…SDELRPAFVE (136 aa)) enclose the B12-binding domain. Residues 898–1226 (KKPRTKPVTL…EKWLGPNING (329 aa)) enclose the AdoMet activation domain. S-adenosyl-L-methionine is bound by residues Asp948, Arg1136, and 1191-1192 (YF).

The protein belongs to the vitamin-B12 dependent methionine synthase family. Methylcob(III)alamin is required as a cofactor. It depends on Zn(2+) as a cofactor.

The catalysed reaction is (6S)-5-methyl-5,6,7,8-tetrahydrofolate + L-homocysteine = (6S)-5,6,7,8-tetrahydrofolate + L-methionine. It participates in amino-acid biosynthesis; L-methionine biosynthesis via de novo pathway; L-methionine from L-homocysteine (MetH route): step 1/1. Functionally, catalyzes the transfer of a methyl group from methyl-cobalamin to homocysteine, yielding enzyme-bound cob(I)alamin and methionine. Subsequently, remethylates the cofactor using methyltetrahydrofolate. The polypeptide is Methionine synthase (metH) (Vibrio vulnificus (strain CMCP6)).